Here is an 81-residue protein sequence, read N- to C-terminus: U6-theraphotoxin-Hs1a (81 aa).

The signal sequence occupies residues 1 to 21; the sequence is MKASMFLALAGLVLLFVVCYA. A propeptide spanning residues 22 to 48 is cleaved from the precursor; it reads SESEEKEFPRELLSTIFAVDDFKGEER. 2 cysteine pairs are disulfide-bonded: Cys50/Cys65 and Cys57/Cys70.

It belongs to the neurotoxin 10 (Hwtx-1) family. 51 (Hntx-8) subfamily. As to expression, expressed by the venom gland.

Its subcellular location is the secreted. Functionally, binds to the nicotinic acetylcholine receptor. Blocks neuromuscular transmission. This is U6-theraphotoxin-Hs1a from Cyriopagopus schmidti (Chinese bird spider).